Reading from the N-terminus, the 40-residue chain is Photosystem II reaction center protein J (40 aa).

Residues 10-30 (LWIIGTVTGILVIGLIGIFFF) form a helical membrane-spanning segment.

Belongs to the PsbJ family. In terms of assembly, PSII is composed of 1 copy each of membrane proteins PsbA, PsbB, PsbC, PsbD, PsbE, PsbF, PsbH, PsbI, PsbJ, PsbK, PsbL, PsbM, PsbT, PsbX, PsbY, PsbZ, Psb30/Ycf12, at least 3 peripheral proteins of the oxygen-evolving complex and a large number of cofactors. It forms dimeric complexes.

It localises to the plastid membrane. In terms of biological role, one of the components of the core complex of photosystem II (PSII). PSII is a light-driven water:plastoquinone oxidoreductase that uses light energy to abstract electrons from H(2)O, generating O(2) and a proton gradient subsequently used for ATP formation. It consists of a core antenna complex that captures photons, and an electron transfer chain that converts photonic excitation into a charge separation. The chain is Photosystem II reaction center protein J from Cuscuta exaltata (Tall dodder).